We begin with the raw amino-acid sequence, 89 residues long: Cytochrome b-c1 complex subunit 6, mitochondrial (89 aa).

The N-terminal 13 residues, 1–13, are a transit peptide targeting the mitochondrion; sequence MGLEDERKMLTGS. The interval 1–27 is disordered; it reads MGLEDERKMLTGSGDPKEEEEEELVDP. Disulfide bonds link C35/C79 and C51/C65. K40 carries the post-translational modification N6-acetyllysine. K83 is modified (N6-acetyllysine).

Belongs to the UQCRH/QCR6 family. As to quaternary structure, component of the ubiquinol-cytochrome c oxidoreductase (cytochrome b-c1 complex, complex III, CIII), a multisubunit enzyme composed of 11 subunits. The complex is composed of 3 respiratory subunits cytochrome b, cytochrome c1 and Rieske protein UQCRFS1, 2 core protein subunits UQCRC1/QCR1 and UQCRC2/QCR2, and 6 low-molecular weight protein subunits UQCRH/QCR6, UQCRB/QCR7, UQCRQ/QCR8, UQCR10/QCR9, UQCR11/QCR10 and subunit 9, the cleavage product of Rieske protein UQCRFS1. The complex exists as an obligatory dimer and forms supercomplexes (SCs) in the inner mitochondrial membrane with NADH-ubiquinone oxidoreductase (complex I, CI) and cytochrome c oxidase (complex IV, CIV), resulting in different assemblies (supercomplex SCI(1)III(2)IV(1) and megacomplex MCI(2)III(2)IV(2)).

The protein resides in the mitochondrion inner membrane. Its function is as follows. Component of the ubiquinol-cytochrome c oxidoreductase, a multisubunit transmembrane complex that is part of the mitochondrial electron transport chain which drives oxidative phosphorylation. The respiratory chain contains 3 multisubunit complexes succinate dehydrogenase (complex II, CII), ubiquinol-cytochrome c oxidoreductase (cytochrome b-c1 complex, complex III, CIII) and cytochrome c oxidase (complex IV, CIV), that cooperate to transfer electrons derived from NADH and succinate to molecular oxygen, creating an electrochemical gradient over the inner membrane that drives transmembrane transport and the ATP synthase. The cytochrome b-c1 complex catalyzes electron transfer from ubiquinol to cytochrome c, linking this redox reaction to translocation of protons across the mitochondrial inner membrane, with protons being carried across the membrane as hydrogens on the quinol. In the process called Q cycle, 2 protons are consumed from the matrix, 4 protons are released into the intermembrane space and 2 electrons are passed to cytochrome c. This chain is Cytochrome b-c1 complex subunit 6, mitochondrial (Uqcrh), found in Rattus norvegicus (Rat).